The sequence spans 131 residues: Small ribosomal subunit protein uS8 (131 aa).

This sequence belongs to the universal ribosomal protein uS8 family. Part of the 30S ribosomal subunit. Contacts proteins S5 and S12.

One of the primary rRNA binding proteins, it binds directly to 16S rRNA central domain where it helps coordinate assembly of the platform of the 30S subunit. The chain is Small ribosomal subunit protein uS8 from Ralstonia nicotianae (strain ATCC BAA-1114 / GMI1000) (Ralstonia solanacearum).